A 423-amino-acid chain; its full sequence is GTPase Obg (423 aa).

One can recognise an Obg domain in the interval 1–158 (MFYDEAKIYV…RWLVLELKLL (158 aa)). One can recognise an OBG-type G domain in the interval 159-328 (ADVGLIGLPN…LLYHVSGLLA (170 aa)). GTP contacts are provided by residues 165-172 (GLPNAGKS), 190-194 (FTTLT), 212-215 (DIPG), 281-284 (NKMD), and 309-311 (SAA). S172 and T192 together coordinate Mg(2+). The 86-residue stretch at 336 to 421 (VTAPEEEKVT…IGKFEFEYVE (86 aa)) folds into the OCT domain.

Belongs to the TRAFAC class OBG-HflX-like GTPase superfamily. OBG GTPase family. Monomer. The cofactor is Mg(2+).

The protein resides in the cytoplasm. Functionally, an essential GTPase which binds GTP, GDP and possibly (p)ppGpp with moderate affinity, with high nucleotide exchange rates and a fairly low GTP hydrolysis rate. Plays a role in control of the cell cycle, stress response, ribosome biogenesis and in those bacteria that undergo differentiation, in morphogenesis control. The polypeptide is GTPase Obg (Moorella thermoacetica (strain ATCC 39073 / JCM 9320)).